Consider the following 117-residue polypeptide: MPEIKIFHNPRCSKSRAALSLLEERGIAAEVVKYLDTPPDLSELKDIFNKLGLASARGMMRVKDDLYKELGLDNPNLDNDALLRAIADHPALLERPIVLANGKAAVGRPLENIEAVL.

C12 serves as the catalytic Nucleophile; cysteine thioarsenate intermediate.

This sequence belongs to the ArsC family.

The catalysed reaction is [glutaredoxin]-dithiol + arsenate + glutathione + H(+) = glutathionyl-S-S-[glutaredoxin] + arsenite + H2O. Functionally, involved in resistance to arsenate. Catalyzes the reduction of arsenate [As(V)] to arsenite [As(III)]. The protein is Arsenate reductase (arsC) of Neisseria meningitidis serogroup A / serotype 4A (strain DSM 15465 / Z2491).